We begin with the raw amino-acid sequence, 1327 residues long: uncharacterized protein (1327 aa).

884-885 contacts substrate; that stretch reads WD. E1023 acts as the Proton donor in catalysis. Substrate is bound at residue 1143–1144; sequence KQ.

In the N-terminal section; belongs to the trehalose phosphatase family. This sequence in the C-terminal section; belongs to the glycosyl hydrolase 65 family.

This is an uncharacterized protein from Mycobacterium tuberculosis (strain CDC 1551 / Oshkosh).